Here is a 37-residue protein sequence, read N- to C-terminus: Large ribosomal subunit protein bL36 (37 aa).

Belongs to the bacterial ribosomal protein bL36 family.

This is Large ribosomal subunit protein bL36 from Chromohalobacter salexigens (strain ATCC BAA-138 / DSM 3043 / CIP 106854 / NCIMB 13768 / 1H11).